The primary structure comprises 329 residues: GTPase Obg (329 aa).

The Obg domain occupies 1–159 (MQFIDQARIT…WFLQLELKLL (159 aa)). Residues 160-328 (AEVGIIGLPN…LLAQVWKELG (169 aa)) enclose the OBG-type G domain. ATP is bound by residues 166–173 (GLPNAGKS), 191–195 (FTTLV), 213–216 (DIPG), 280–283 (NKQE), and 309–311 (SAA). Positions 173 and 193 each coordinate Mg(2+).

The protein belongs to the TRAFAC class OBG-HflX-like GTPase superfamily. OBG GTPase family. In terms of assembly, monomer. Requires Mg(2+) as cofactor.

It localises to the cytoplasm. Functionally, an essential GTPase which binds GTP, GDP and possibly (p)ppGpp with moderate affinity, with high nucleotide exchange rates and a fairly low GTP hydrolysis rate. Plays a role in control of the cell cycle, stress response, ribosome biogenesis and in those bacteria that undergo differentiation, in morphogenesis control. This is GTPase Obg from Prochlorococcus marinus (strain MIT 9313).